The following is a 288-amino-acid chain: 30 kDa spicule matrix protein (288 aa).

The N-terminal stretch at Met-1–Ala-20 is a signal peptide. The C-type lectin domain maps to Ala-93 to Pro-163. N-linked (GlcNAc...) asparagine glycosylation is present at Asn-103.

Spines and tube feet.

In terms of biological role, matrix protein of the sea urchin embryo spicule. The function of the matrix proteins is to direct crystal growth in certain orientations and inhibit growth in others. The sequence is that of 30 kDa spicule matrix protein (SM30) from Hemicentrotus pulcherrimus (Sea urchin).